The primary structure comprises 565 residues: Protein unc-87 (565 aa).

Residues 1 to 27 (MLSFNNTTSASSFQSASSRYLMSSSSS) show a composition bias toward low complexity. 2 disordered regions span residues 1–83 (MLSF…TTNS) and 237–262 (IPSQ…RNTN). The span at 54–69 (EALERLRPNTASRERN) shows a compositional bias: basic and acidic residues. Calponin-like repeat units lie at residues 237–262 (IPSQ…RNTN), 285–310 (VRLQ…RDVC), and 338–363 (VRLQ…RRET). Polar residues predominate over residues 250 to 262 (KLMTNFGTPRNTN). The segment covering 369-381 (SKHPEYDHEKPDQ) has biased composition (basic and acidic residues). Residues 369–400 (SKHPEYDHEKPDQSEIPLQSGTNKFASQKGMT) form a disordered region. Over residues 384-398 (IPLQSGTNKFASQKG) the composition is skewed to polar residues. Calponin-like repeat units lie at residues 384-409 (IPLQ…RRET), 431-456 (IPSQ…RWEV), 472-497 (VRLQ…RNTT), and 517-542 (IPSQ…RDVK).

It belongs to the calponin family. As to quaternary structure, monomer. Interacts with F-actin. Interacts with myosin. In terms of tissue distribution, expressed in the body wall muscles. Isoform a: Expression in the pharynx, anal depressor muscle, uterine muscle, vulva and unidentified neurons in the head and the ventral region. Isoform b: Expression in the body wall muscles, spermatheca, vulva and in the myoepithelial sheath.

Its subcellular location is the cytoplasm. The protein resides in the myofibril. The protein localises to the sarcomere. It is found in the i band. Its function is as follows. Thin filament-associated protein that is implicated in actin bundling and actin filament dynamics. Exhibits F-actin cross-linking activity. Required for the maintenance of sarcomeric actin organization in striated muscles. Competes with unc-60 isoform b for actin binding and protects actin filaments from depolymerization by unc-60, thereby contributing to actin filament stability. Cooperates with myosin to form actomyosin bundles and inhibits actomyosin ATPase activity and actomyosin motility. Might protect the myofilaments from mechanical stress. Acts as a negative regulator of myosin-dependent contractility of smooth muscle-like cells in the somatic gonad. This Caenorhabditis elegans protein is Protein unc-87 (unc-87).